The chain runs to 222 residues: Sororin-like protein (222 aa).

Residues 1–189 form a disordered region; it reads MEAPRSVGGR…VKQEKEDPVS (189 aa). Positions 24–33 are enriched in low complexity; that stretch reads SRSSQQSSSS. Positions 47 to 60 are enriched in basic and acidic residues; sequence RLVEQTTLKEKPKD. The span at 88 to 105 shows a compositional bias: low complexity; it reads ADLASPASAPSRPQTSRS. The short motif at 155 to 162 is the Nuclear localization signal element; it reads GKKTRQAS. Positions 167–179 are enriched in basic residues; that stretch reads KTLKVAPKKRQRT. The C-terminal Sororin domain stretch occupies residues 192–214; it reads CQDYIEKQKAYFAEIDAFELPVE.

It belongs to the sororin family.

It is found in the nucleus. Functionally, regulator of sister chromatid cohesion in mitosis stabilizing cohesin complex association with chromatin. Antagonizes the action of WAPL proteins (WAPL1 and WAPL2) which stimulates cohesin dissociation from chromatin, particularly during somatic division in root cells and meiocytes during anaphase I. Required for centromeric sister chromatid cohesion during male meiosis (microsporogenesis). Cohesion ensures that chromosome partitioning is accurate in dividing cells and may play an important role in DNA repair. The protein is Sororin-like protein of Arabidopsis thaliana (Mouse-ear cress).